Reading from the N-terminus, the 217-residue chain is Eukaryotic translation initiation factor 4E (217 aa).

Residues 1 to 11 (MATVEPETTPT) are compositionally biased toward low complexity. The interval 1–27 (MATVEPETTPTTNPPPAEEEKTESNQE) is disordered. A2 bears the N-acetylalanine mark. The residue at position 22 (T22) is a Phosphothreonine. The segment at 37–40 (HPLQ) is EIF4EBP1/2/3 binding. Residue 56–57 (WQ) participates in mRNA binding. The segment at 73 to 77 (WALYN) is EIF4EBP1/2/3 binding. MRNA is bound at residue 102 to 103 (WE). Residues 132 to 139 (ETLLCLIG) are EIF4EBP1/2/3 binding. MRNA contacts are provided by residues 157–162 (RAKGDK) and 205–207 (TKS). The residue at position 209 (S209) is a Phosphoserine; by PKC and MKNK2.

It belongs to the eukaryotic initiation factor 4E family. In terms of assembly, eIF4F is a multi-subunit complex, the composition of which varies with external and internal environmental conditions. It is composed of at least EIF4A, EIF4E and EIF4G1/EIF4G3. EIF4E is also known to interact with other partners. Interacts with EIF4ENIF1/4E-T; promotes recruitment to P-bodies and import into the nucleus. Hypophosphorylated EIF4EBP1, EIF4EBP2 and EIF4EBP3 compete with EIF4G1/EIF4G3 to interact with EIF4E; insulin stimulated MAP-kinase (MAPK1 and MAPK3) phosphorylation of EIF4EBP1 causes dissociation of the complex allowing EIF4G1/EIF4G3 to bind and consequent initiation of translation. Interacts mutually exclusive with EIF4A1 or EIF4A2. Interacts with NGDN and PIWIL2. Component of the CYFIP1-EIF4E-FMR1 complex composed of CYFIP, EIF4E and FMR1. Interacts directly with CYFIP1. Interacts with CLOCK. Binds to MKNK2 in nucleus. Interacts with LIMD1, WTIP and AJUBA. Interacts with APOBEC3G in an RNA-dependent manner. Interacts with LARP1. Interacts with METTL3. Interacts with RBM24; this interaction prevents EIF4E from binding to p53/TP53 mRNA and inhibits the assembly of translation initiation complex. Interacts with DDX3X; interaction is direct and in an RNA-independent manner; this interaction enhances EIF4E cap-binding ability and is required for the repression of cap-dependent translation and the increase of IRES-mediated translation. DDX3X competes with EIF4G1 for interaction with EIF4E. Interacts with EIF4G1; which in a mutual exclusive interaction associates either with EIF1 or with EIF4E on a common binding site. Interacts with BTG4 and CNOT7. Interacts with LRPPRC (via N-terminus); the interaction promotes association of EIF4E with 4ESE-containing mRNAs. Interacts with mRNA cleavage enzyme CPSF3 and its cofactor CPSF1. Interacts (via RING-type zinc finger) with PML; the interaction results in conformational changes of both interacting proteins and reduces EIF4E affinity for the 5' m7G cap of mRNA, thus reducing EIF4E-mediated mRNA nuclear export. Interacts with homeobox protein HHEX/PRH; the interaction inhibits EIF4E-mediated mRNA nuclear export. Interacts with homeobox protein HOXA9; the interaction positively regulates EIF4E-mediated mRNA nuclear export. Interacts with homeobox protein EMX2. As to quaternary structure, (Microbial infection) Interacts with murine norovirus viral genome-linked protein; this interaction plays a role in translation of viral proteins. Post-translationally, phosphorylation increases the ability of the protein to bind to mRNA caps and to form the eIF4F complex. Phosphorylation also enhances its mRNA transport function. Phosphorylation at Ser-209 is not essential for protein synthesis.

Its subcellular location is the cytoplasm. It is found in the P-body. The protein localises to the stress granule. The protein resides in the nucleus. It localises to the nucleus speckle. Its subcellular location is the nuclear body. Its function is as follows. Acts in the cytoplasm to initiate and regulate protein synthesis and is required in the nucleus for export of a subset of mRNAs from the nucleus to the cytoplasm which promotes processes such as RNA capping, processing and splicing. Component of the protein complex eIF4F, which is involved in the recognition of the mRNA cap, ATP-dependent unwinding of 5'-terminal secondary structure and recruitment of mRNA to the ribosome. This protein recognizes and binds the 7-methylguanosine (m7G)-containing mRNA cap during an early step in the initiation of protein synthesis and facilitates ribosome binding by inducing the unwinding of the mRNAs secondary structures. Together with EIF4G1, antagonizes the scanning promoted by EIF1-EIF4G1 and is required for TISU translation, a process where the TISU element recognition makes scanning unnecessary. In addition to its role in translation initiation, also acts as a regulator of translation and stability in the cytoplasm. Component of the CYFIP1-EIF4E-FMR1 complex which binds to the mRNA cap and mediates translational repression: in the complex, EIF4E mediates the binding to the mRNA cap. Component of a multiprotein complex that sequesters and represses translation of proneurogenic factors during neurogenesis. In P-bodies, component of a complex that mediates the storage of translationally inactive mRNAs in the cytoplasm and prevents their degradation. May play an important role in spermatogenesis through translational regulation of stage-specific mRNAs during germ cell development. As well as its roles in translation, also involved in mRNA nucleocytoplasmic transport. Its role in mRNA export from the nucleus to the cytoplasm relies on its ability to bind the m7G cap of RNAs and on the presence of the 50-nucleotide EIF4E sensitivity element (4ESE) in the 3'UTR of sensitive transcripts. Interaction with the 4ESE is mediated by LRPPRC which binds simultaneously to both EIF4E and the 4ESE, thereby acting as a platform for assembly for the RNA export complex. EIF4E-dependent mRNA export is independent of ongoing protein or RNA synthesis and is also NFX1-independent but is XPO1-dependent with LRPPRC interacting with XPO1 to form an EIF4E-dependent mRNA export complex. Alters the composition of the cytoplasmic face of the nuclear pore to promote RNA export by reducing RANBP2 expression, relocalizing nucleoporin NUP214 and increasing expression of RANBP1 and RNA export factors DDX19 and GLE1. Promotes the nuclear export of cyclin CCND1 mRNA. Promotes the nuclear export of NOS2/iNOS mRNA. Promotes the nuclear export of MDM2 mRNA. Also promotes the export of additional mRNAs, including others involved in the cell cycle. In the nucleus, binds to capped splice factor-encoding mRNAs and stimulates their nuclear export to enhance splice factor production by increasing their cytoplasmic availability to the translation machinery. May also regulate splicing through interaction with the spliceosome in an RNA and m7G cap-dependent manner. Also binds to some pre-mRNAs and may play a role in their recruitment to the spliceosome. Promotes steady-state capping of a subset of coding and non-coding RNAs by mediating nuclear export of capping machinery mRNAs including RNMT, RNGTT and RAMAC to enhance their translation. Stimulates mRNA 3'-end processing by promoting the expression of several core cleavage complex factors required for mRNA cleavage and polyadenylation, and may also have a direct effect through its interaction with the CPSF3 cleavage enzyme. Rescues cells from apoptosis by promoting activation of serine/threonine-protein kinase AKT1 through mRNA export of NBS1 which potentiates AKT1 phosphorylation and also through mRNA export of AKT1 effectors, allowing for increased production of these proteins. In Mus musculus (Mouse), this protein is Eukaryotic translation initiation factor 4E.